A 339-amino-acid chain; its full sequence is Putative zinc metalloprotease FN1322 (339 aa).

His-17 serves as a coordination point for Zn(2+). Residue Glu-18 is part of the active site. His-21 provides a ligand contact to Zn(2+). Transmembrane regions (helical) follow at residues 88 to 110 (FIVLFAGVFMNFLMAFILLFVTA), 262 to 284 (FGWISIASLCVVLSINIGVLNLL), and 318 to 335 (GMILLLFFILMISVNDVW). In terms of domain architecture, PDZ spans 96–179 (FMNFLMAFIL…ITALVERNGK (84 aa)).

This sequence belongs to the peptidase M50B family. The cofactor is Zn(2+).

It is found in the cell membrane. The protein is Putative zinc metalloprotease FN1322 of Fusobacterium nucleatum subsp. nucleatum (strain ATCC 25586 / DSM 15643 / BCRC 10681 / CIP 101130 / JCM 8532 / KCTC 2640 / LMG 13131 / VPI 4355).